Reading from the N-terminus, the 379-residue chain is Diaminopimelate decarboxylase (379 aa).

Lys48 carries the post-translational modification N6-(pyridoxal phosphate)lysine. Pyridoxal 5'-phosphate-binding positions include Gly214 and 242–245 (EPGR). 3 residues coordinate substrate: Arg245, Arg280, and Tyr284. The Proton donor role is filled by Cys309. 2 residues coordinate substrate: Glu310 and Tyr338. Tyr338 serves as a coordination point for pyridoxal 5'-phosphate.

This sequence belongs to the Orn/Lys/Arg decarboxylase class-II family. LysA subfamily. As to quaternary structure, homodimer. Pyridoxal 5'-phosphate is required as a cofactor.

The enzyme catalyses meso-2,6-diaminopimelate + H(+) = L-lysine + CO2. Its pathway is amino-acid biosynthesis; L-lysine biosynthesis via DAP pathway; L-lysine from DL-2,6-diaminopimelate: step 1/1. In terms of biological role, specifically catalyzes the decarboxylation of meso-diaminopimelate (meso-DAP) to L-lysine. In Deinococcus radiodurans (strain ATCC 13939 / DSM 20539 / JCM 16871 / CCUG 27074 / LMG 4051 / NBRC 15346 / NCIMB 9279 / VKM B-1422 / R1), this protein is Diaminopimelate decarboxylase.